Reading from the N-terminus, the 173-residue chain is Small ribosomal subunit protein uS5 (173 aa).

Residues 17–80 form the S5 DRBM domain; the sequence is WQERVIQIRR…ADGKKQLIEV (64 aa).

The protein belongs to the universal ribosomal protein uS5 family. In terms of assembly, part of the 30S ribosomal subunit. Contacts proteins S4 and S8.

Its function is as follows. With S4 and S12 plays an important role in translational accuracy. In terms of biological role, located at the back of the 30S subunit body where it stabilizes the conformation of the head with respect to the body. This chain is Small ribosomal subunit protein uS5, found in Synechocystis sp. (strain ATCC 27184 / PCC 6803 / Kazusa).